The chain runs to 314 residues: tRNA uridine(34) hydroxylase (314 aa).

One can recognise a Rhodanese domain in the interval 140-234; the sequence is SRDDVILVDT…YLEETPAEES (95 aa). Cys-194 serves as the catalytic Cysteine persulfide intermediate.

It belongs to the TrhO family.

It carries out the reaction uridine(34) in tRNA + AH2 + O2 = 5-hydroxyuridine(34) in tRNA + A + H2O. In terms of biological role, catalyzes oxygen-dependent 5-hydroxyuridine (ho5U) modification at position 34 in tRNAs. This Acinetobacter baylyi (strain ATCC 33305 / BD413 / ADP1) protein is tRNA uridine(34) hydroxylase.